The chain runs to 181 residues: Translation initiation factor IF-3 (181 aa).

This sequence belongs to the IF-3 family. In terms of assembly, monomer.

The protein resides in the cytoplasm. IF-3 binds to the 30S ribosomal subunit and shifts the equilibrium between 70S ribosomes and their 50S and 30S subunits in favor of the free subunits, thus enhancing the availability of 30S subunits on which protein synthesis initiation begins. This chain is Translation initiation factor IF-3, found in Idiomarina loihiensis (strain ATCC BAA-735 / DSM 15497 / L2-TR).